The sequence spans 356 residues: Iron-regulated protein A (356 aa).

Positions 1–44 are cleaved as a signal peptide; the sequence is MIVTGSQVRQGLNTWFVLPLRRTAIGLGCAGVATLFSACGQTQA. Hydrophilic regions lie at residues 75-145 and 240-310; these read QALQ…EQRE and GGPL…ATAR.

As to quaternary structure, the iron-regulated protein A is one unit of the protein complex CPVI-4, which is synthesized under iron deficient conditions.

The protein resides in the cell inner membrane. Its function is as follows. IrpA occurs under iron-deficient growth conditions in cyanobacterium Synechococcus and disappears in cells recovering from iron starvation. It seems to be involved in iron acquisition, uptake or storage. The protein is Iron-regulated protein A (irpA) of Synechococcus elongatus (strain ATCC 33912 / PCC 7942 / FACHB-805) (Anacystis nidulans R2).